The following is a 150-amino-acid chain: Large ribosomal subunit protein bL9 (150 aa).

The protein belongs to the bacterial ribosomal protein bL9 family.

Binds to the 23S rRNA. The sequence is that of Large ribosomal subunit protein bL9 from Streptococcus pyogenes serotype M5 (strain Manfredo).